A 48-amino-acid chain; its full sequence is Bacteriochlorophyll c-binding protein (48 aa).

An a bacteriochlorophyll c-binding site is contributed by His-25.

This sequence belongs to the BChl C/E-binding protein family.

Its subcellular location is the chlorosome. It localises to the chlorosome envelope. Its function is as follows. Component of the photosynthetic apparatus. The light harvesting B740 complex binds bacteriochlorophyll c. The polypeptide is Bacteriochlorophyll c-binding protein (csmA) (Chlorobaculum thiosulfatiphilum (Chlorobium limicola f.sp. thiosulfatophilum)).